The primary structure comprises 625 residues: ATP-dependent RNA helicase DBP9 (625 aa).

Residues Met1 to Ile21 are disordered. A Q motif motif is present at residues His24–Ala52. The region spanning Ile55 to Leu233 is the Helicase ATP-binding domain. Residue Ala68–Thr75 coordinates ATP. Positions Asp181–Asp184 match the DEAD box motif. The region spanning Leu260–Lys485 is the Helicase C-terminal domain. 2 disordered regions span residues Arg339–Tyr393 and Ile590–His625. A compositionally biased stretch (basic and acidic residues) spans Arg347 to Glu357. Residues Ala361 to Tyr370 are compositionally biased toward polar residues. The span at Gly599–Gly610 shows a compositional bias: basic residues.

Belongs to the DEAD box helicase family. DDX56/DBP9 subfamily.

It localises to the nucleus. The protein resides in the nucleolus. It carries out the reaction ATP + H2O = ADP + phosphate + H(+). In terms of biological role, ATP-binding RNA helicase involved in the biogenesis of 60S ribosomal subunits and is required for the normal formation of 25S and 5.8S rRNAs. In Ajellomyces capsulatus (strain NAm1 / WU24) (Darling's disease fungus), this protein is ATP-dependent RNA helicase DBP9 (DBP9).